The following is a 306-amino-acid chain: Putative HTH-type transcriptional regulatory protein Mhun_2548 (306 aa).

The region spanning 132–189 (LRELRETRSLSLGDLGQILGVSRRTVAKYEAGMGTTIEIALRIEETFDSGVIEPIDLI) is the HTH cro/C1-type domain. Positions 143-162 (LGDLGQILGVSRRTVAKYEA) form a DNA-binding region, H-T-H motif.

This is Putative HTH-type transcriptional regulatory protein Mhun_2548 from Methanospirillum hungatei JF-1 (strain ATCC 27890 / DSM 864 / NBRC 100397 / JF-1).